Reading from the N-terminus, the 294-residue chain is 4-hydroxy-tetrahydrodipicolinate synthase (294 aa).

Pyruvate is bound at residue Thr-47. The Proton donor/acceptor role is filled by Tyr-135. Lys-163 serves as the catalytic Schiff-base intermediate with substrate. A pyruvate-binding site is contributed by Thr-205.

The protein belongs to the DapA family. In terms of assembly, homotetramer; dimer of dimers.

It is found in the cytoplasm. The enzyme catalyses L-aspartate 4-semialdehyde + pyruvate = (2S,4S)-4-hydroxy-2,3,4,5-tetrahydrodipicolinate + H2O + H(+). Its pathway is amino-acid biosynthesis; L-lysine biosynthesis via DAP pathway; (S)-tetrahydrodipicolinate from L-aspartate: step 3/4. Its function is as follows. Catalyzes the condensation of (S)-aspartate-beta-semialdehyde [(S)-ASA] and pyruvate to 4-hydroxy-tetrahydrodipicolinate (HTPA). The protein is 4-hydroxy-tetrahydrodipicolinate synthase of Rickettsia montanensis.